We begin with the raw amino-acid sequence, 705 residues long: Ribosomal RNA large subunit methyltransferase K/L (705 aa).

Positions 43–154 (LMYQSLMWSR…KDTASIALDL (112 aa)) constitute a THUMP domain.

This sequence belongs to the methyltransferase superfamily. RlmKL family.

It localises to the cytoplasm. It carries out the reaction guanosine(2445) in 23S rRNA + S-adenosyl-L-methionine = N(2)-methylguanosine(2445) in 23S rRNA + S-adenosyl-L-homocysteine + H(+). The catalysed reaction is guanosine(2069) in 23S rRNA + S-adenosyl-L-methionine = N(2)-methylguanosine(2069) in 23S rRNA + S-adenosyl-L-homocysteine + H(+). Specifically methylates the guanine in position 2445 (m2G2445) and the guanine in position 2069 (m7G2069) of 23S rRNA. In Erwinia tasmaniensis (strain DSM 17950 / CFBP 7177 / CIP 109463 / NCPPB 4357 / Et1/99), this protein is Ribosomal RNA large subunit methyltransferase K/L.